The chain runs to 389 residues: Chalcone synthase 1 (389 aa).

Residue C163 is part of the active site.

It belongs to the thiolase-like superfamily. Chalcone/stilbene synthases family.

It catalyses the reaction (E)-4-coumaroyl-CoA + 3 malonyl-CoA + 3 H(+) = 2',4,4',6'-tetrahydroxychalcone + 3 CO2 + 4 CoA. The protein operates within secondary metabolite biosynthesis; flavonoid biosynthesis. Its function is as follows. The primary product of this enzyme is 4,2',4',6'-tetrahydroxychalcone (also termed naringenin-chalcone or chalcone) which can under specific conditions spontaneously isomerize into naringenin. In Citrus sinensis (Sweet orange), this protein is Chalcone synthase 1 (CHS1).